Reading from the N-terminus, the 671-residue chain is tRNA(Met) cytidine acetyltransferase TmcA (671 aa).

ATP-binding positions include Gln180, 202–211, and Arg319; that span reads GRGKSALAGQ. The N-acetyltransferase domain maps to 356–531; it reads QTLWQSDPET…SGCYTAMALL (176 aa). Acetyl-CoA is bound by residues 461–463, 468–474, Glu499, and Arg506; these read IAV and QREGTGR.

The protein belongs to the RNA cytidine acetyltransferase family. TmcA subfamily.

It is found in the cytoplasm. It carries out the reaction cytidine(34) in elongator tRNA(Met) + acetyl-CoA + ATP + H2O = N(4)-acetylcytidine(34) in elongator tRNA(Met) + ADP + phosphate + CoA + H(+). The enzyme catalyses 2-hydroxyisobutanoyl-CoA + L-lysyl-[protein] = N(6)-(2-hydroxyisobutanoyl)-L-lysyl-[protein] + CoA + H(+). Its activity is regulated as follows. ATP/GTP hydrolysis is stimulated by the addition of acetyl-CoA and tRNA(Met). Binding of acetyl-CoA to TmcA activates both ATPase and tRNA-binding activities. ATP promotes the 2-hydroxyisobutyryltransferase activity. In terms of biological role, catalyzes the formation of N(4)-acetylcytidine (ac(4)C) at the wobble position of tRNA(Met), by using acetyl-CoA as an acetyl donor and ATP (or GTP). It recognizes the wobble base of tRNA(Met), thus distinguishing between tRNA(Met) and the structurally similar tRNA(Ile2). Could use an RNA helicase motor driven by ATP hydrolysis to deliver the wobble base of tRNA(Met) to the acetyltransferase domain of TmcA. Its function is as follows. Also functions as a lysine 2-hydroxyisobutyryltransferase to regulate transcription. Can specifically catalyze the 2-hydroxyisobutyrylation (Khib) of the DNA-binding protein H-NS. Hydroxyisobutyrylation of H-NS decreases its DNA-binding activity, promotes the expression of acid-resistance genes and enhances bacterial survival under extreme acid stress. The chain is tRNA(Met) cytidine acetyltransferase TmcA from Escherichia coli (strain K12).